A 278-amino-acid chain; its full sequence is Transmembrane protein 41A-B (278 aa).

Positions 1 to 23 are cleaved as a signal peptide; the sequence is MRSIWGLIVLVAAATFYLYLLSA. A run of 5 helical transmembrane segments spans residues 78 to 98, 101 to 121, 164 to 184, 191 to 211, and 230 to 250; these read GYVF…AIPG, FLNM…IACT, LFFF…FLNV, IPIP…NFIC, and WFTL…GALI.

This sequence belongs to the TMEM41 family.

It is found in the membrane. The sequence is that of Transmembrane protein 41A-B from Danio rerio (Zebrafish).